Consider the following 359-residue polypeptide: Cinnamyl alcohol dehydrogenase 8 (359 aa).

Cysteine 46 is a Zn(2+) binding site. Serine 48 contributes to the NADP(+) binding site. The Zn(2+) site is built by histidine 68, glutamate 69, cysteine 99, cysteine 102, cysteine 105, cysteine 113, and cysteine 162. NADP(+) is bound by residues threonine 166, 187 to 192 (GLGGLG), 210 to 215 (STSEKK), threonine 250, glycine 274, and 297 to 299 (SMI).

The protein belongs to the zinc-containing alcohol dehydrogenase family. As to quaternary structure, homodimer. Zn(2+) serves as cofactor. As to expression, expressed in the differentiation and elongation zones of primary and lateral roots. Expressed in the hypocotyl, cotyledon veins, vasculature of the first rosette leaves, hydathodes and trichomes. In stems, expressed in the vascular cambium and developing xylem tissues. Expressed in the style, anthers, stamen filaments, stigmatic regions in flowers, and abscission and style regions of siliques.

The enzyme catalyses (E)-cinnamyl alcohol + NADP(+) = (E)-cinnamaldehyde + NADPH + H(+). It participates in aromatic compound metabolism; phenylpropanoid biosynthesis. Functionally, involved in lignin biosynthesis. Catalyzes the final step specific for the production of lignin monomers. Catalyzes the NADPH-dependent reduction of coniferaldehyde, 5-hydroxyconiferaldehyde, sinapaldehyde, 4-coumaraldehyde and caffeyl aldehyde to their respective alcohols. In Arabidopsis thaliana (Mouse-ear cress), this protein is Cinnamyl alcohol dehydrogenase 8 (CAD8).